The primary structure comprises 501 residues: 2-isopropylmalate synthase (501 aa).

The 263-residue stretch at 7–269 (VRIFDTTLRD…QTQIKTEEIA (263 aa)) folds into the Pyruvate carboxyltransferase domain. Mn(2+) is bound by residues aspartate 16, histidine 204, histidine 206, and asparagine 240. The tract at residues 394–501 (QLEGFTVSTG…RAYISALNRL (108 aa)) is regulatory domain.

It belongs to the alpha-IPM synthase/homocitrate synthase family. LeuA type 1 subfamily. In terms of assembly, homodimer. It depends on Mn(2+) as a cofactor.

The protein resides in the cytoplasm. It carries out the reaction 3-methyl-2-oxobutanoate + acetyl-CoA + H2O = (2S)-2-isopropylmalate + CoA + H(+). It participates in amino-acid biosynthesis; L-leucine biosynthesis; L-leucine from 3-methyl-2-oxobutanoate: step 1/4. Catalyzes the condensation of the acetyl group of acetyl-CoA with 3-methyl-2-oxobutanoate (2-ketoisovalerate) to form 3-carboxy-3-hydroxy-4-methylpentanoate (2-isopropylmalate). In Leptospira interrogans serogroup Icterohaemorrhagiae serovar copenhageni (strain Fiocruz L1-130), this protein is 2-isopropylmalate synthase.